A 686-amino-acid polypeptide reads, in one-letter code: tRNA (guanine(37)-N(1))-methyltransferase (686 aa).

The disordered stretch occupies residues 206 to 244; it reads GGPSSVSLTEDTDGSEQPQGLPRAAAAPPPPSNKRRASY. Residues histidine 428, 466–467, 495–496, and asparagine 530 each bind S-adenosyl-L-methionine; these read DL and DG.

It belongs to the class I-like SAM-binding methyltransferase superfamily. TRM5/TYW2 family. As to quaternary structure, monomer.

Its subcellular location is the mitochondrion matrix. It is found in the nucleus. It localises to the cytoplasm. It catalyses the reaction guanosine(37) in tRNA + S-adenosyl-L-methionine = N(1)-methylguanosine(37) in tRNA + S-adenosyl-L-homocysteine + H(+). In terms of biological role, specifically methylates the N1 position of guanosine-37 in various cytoplasmic and mitochondrial tRNAs. Methylation is not dependent on the nature of the nucleoside 5' of the target nucleoside. This is the first step in the biosynthesis of wybutosine (yW), a modified base adjacent to the anticodon of tRNAs and required for accurate decoding. The sequence is that of tRNA (guanine(37)-N(1))-methyltransferase from Leishmania major.